Consider the following 302-residue polypeptide: Probable 2-(5''-triphosphoribosyl)-3'-dephosphocoenzyme-A synthase 1 (302 aa).

The protein belongs to the CitG/MdcB family.

The enzyme catalyses 3'-dephospho-CoA + ATP = 2'-(5''-triphospho-alpha-D-ribosyl)-3'-dephospho-CoA + adenine. The polypeptide is Probable 2-(5''-triphosphoribosyl)-3'-dephosphocoenzyme-A synthase 1 (Salmonella paratyphi A (strain ATCC 9150 / SARB42)).